A 281-amino-acid polypeptide reads, in one-letter code: MEMO1 family protein PAE0818 (281 aa).

This sequence belongs to the MEMO1 family.

The protein is MEMO1 family protein PAE0818 of Pyrobaculum aerophilum (strain ATCC 51768 / DSM 7523 / JCM 9630 / CIP 104966 / NBRC 100827 / IM2).